Here is a 29-residue protein sequence, read N- to C-terminus: Dermaseptin-H7 (29 aa).

L29 carries the leucine amide modification.

Belongs to the frog skin active peptide (FSAP) family. Dermaseptin subfamily. In terms of tissue distribution, expressed by the skin glands.

It localises to the secreted. Its function is as follows. Has antibacterial activity against the Gram-negative bacterium E.coli and the Gram-positive bacterium S.aureus. Has antiprotozoal activity against L.amazonensis. Has antifungal activity. Has no hemolytic activity. The protein is Dermaseptin-H7 of Pithecopus hypochondrialis (Orange-legged leaf frog).